A 361-amino-acid chain; its full sequence is MCMTMMSDISQDLLEEILSRVPITSLRAVKSTCKRWKDLLNDPSFSKKYGGKRDNEFLAIMTSGSRASLMSVNLHGPRDNKDLEDPFIKQIGELNQDQIFKVFHCDGLLLCITNEDNTRLVVWNPYLAQTRCIQPIDKFYIYDWYCLGYDKDKNHKILVVYSPMFGRIEYEIYSFLSKSWIVLSFPTDWQISRDECLSLKGNTYFIAYKKMEVEEVGFQEFLLCFDFTNERFGPLLPLPFQCYNQTSLVLSTVQEEQLAVLCKRCDAYETKIWITTKIEPNAVSWSYFLKFDFKVDISGGSFFVDVEEKVAVLFCINREKEKGINNKTYMIGEDGYYKEVDLGESNWCPSMCSYVPSCVQV.

The 47-residue stretch at 3–49 (MTMMSDISQDLLEEILSRVPITSLRAVKSTCKRWKDLLNDPSFSKKY) folds into the F-box domain.

In Arabidopsis thaliana (Mouse-ear cress), this protein is Putative F-box protein At3g19560.